A 248-amino-acid chain; its full sequence is 3-deoxy-manno-octulosonate cytidylyltransferase (248 aa).

The protein belongs to the KdsB family.

Its subcellular location is the cytoplasm. It catalyses the reaction 3-deoxy-alpha-D-manno-oct-2-ulosonate + CTP = CMP-3-deoxy-beta-D-manno-octulosonate + diphosphate. Its pathway is nucleotide-sugar biosynthesis; CMP-3-deoxy-D-manno-octulosonate biosynthesis; CMP-3-deoxy-D-manno-octulosonate from 3-deoxy-D-manno-octulosonate and CTP: step 1/1. The protein operates within bacterial outer membrane biogenesis; lipopolysaccharide biosynthesis. Activates KDO (a required 8-carbon sugar) for incorporation into bacterial lipopolysaccharide in Gram-negative bacteria. This Desulfosudis oleivorans (strain DSM 6200 / JCM 39069 / Hxd3) (Desulfococcus oleovorans) protein is 3-deoxy-manno-octulosonate cytidylyltransferase.